The chain runs to 1051 residues: DNA-directed RNA polymerase subunit beta (1051 aa).

It belongs to the RNA polymerase beta chain family. As to quaternary structure, in plastids the minimal PEP RNA polymerase catalytic core is composed of four subunits: alpha, beta, beta', and beta''. When a (nuclear-encoded) sigma factor is associated with the core the holoenzyme is formed, which can initiate transcription (Potential).

Its subcellular location is the plastid. It localises to the apicoplast. It carries out the reaction RNA(n) + a ribonucleoside 5'-triphosphate = RNA(n+1) + diphosphate. DNA-dependent RNA polymerase catalyzes the transcription of DNA into RNA using the four ribonucleoside triphosphates as substrates. The polypeptide is DNA-directed RNA polymerase subunit beta (rpoB) (Toxoplasma gondii).